The following is a 472-amino-acid chain: Tyrosine--tRNA ligase, mitochondrial (472 aa).

Residue Y72 participates in L-tyrosine binding. D76 contacts ATP. The short motif at 77-86 is the 'HIGH' region element; that stretch reads PTGDSLHVGH. D116, Y216, Q220, D223, and Q242 together coordinate L-tyrosine. ATP contacts are provided by I269 and K279. The short motif at 276 to 280 is the 'KMSKS' region element; sequence KLGKS. An N6-acetyllysine mark is found at K350 and K362.

It belongs to the class-I aminoacyl-tRNA synthetase family. As to quaternary structure, homodimer.

The protein localises to the mitochondrion matrix. The catalysed reaction is tRNA(Tyr) + L-tyrosine + ATP = L-tyrosyl-tRNA(Tyr) + AMP + diphosphate + H(+). In terms of biological role, catalyzes the attachment of tyrosine to tRNA(Tyr) in a two-step reaction: tyrosine is first activated by ATP to form Tyr-AMP and then transferred to the acceptor end of tRNA(Tyr). The polypeptide is Tyrosine--tRNA ligase, mitochondrial (Yars2) (Mus musculus (Mouse)).